The chain runs to 140 residues: Nucleoside diphosphate kinase (140 aa).

Lys11, Phe59, Arg87, Thr93, Arg104, and Asn114 together coordinate ATP. The active-site Pros-phosphohistidine intermediate is the His117.

It belongs to the NDK family. Homotetramer. Mg(2+) is required as a cofactor.

The protein resides in the cytoplasm. It carries out the reaction a 2'-deoxyribonucleoside 5'-diphosphate + ATP = a 2'-deoxyribonucleoside 5'-triphosphate + ADP. The enzyme catalyses a ribonucleoside 5'-diphosphate + ATP = a ribonucleoside 5'-triphosphate + ADP. Its function is as follows. Major role in the synthesis of nucleoside triphosphates other than ATP. The ATP gamma phosphate is transferred to the NDP beta phosphate via a ping-pong mechanism, using a phosphorylated active-site intermediate. This is Nucleoside diphosphate kinase from Paracoccus denitrificans (strain Pd 1222).